A 118-amino-acid chain; its full sequence is Cell division topological specificity factor (118 aa).

Positions 86-118 (RSQAKAVSSQENGASSQEAVSSQESVSTPGAME) are disordered. Over residues 99–112 (ASSQEAVSSQESVS) the composition is skewed to low complexity.

This sequence belongs to the MinE family.

Prevents the cell division inhibition by proteins MinC and MinD at internal division sites while permitting inhibition at polar sites. This ensures cell division at the proper site by restricting the formation of a division septum at the midpoint of the long axis of the cell. This chain is Cell division topological specificity factor, found in Prochlorococcus marinus (strain MIT 9313).